The sequence spans 118 residues: uncharacterized protein (118 aa).

Residues 98 to 118 (KGKGNEGREEAEEPLEEPEEG) form a disordered region. Residues 106–118 (EEAEEPLEEPEEG) are compositionally biased toward acidic residues.

It belongs to the UPF0440 family.

This is an uncharacterized protein from Pyrococcus abyssi (strain GE5 / Orsay).